Here is a 415-residue protein sequence, read N- to C-terminus: Ankyrin repeat domain-containing protein 10 (415 aa).

4 ANK repeats span residues 20–49, 56–85, 90–119, and 123–152; these read SLRF…RAHL, YGWT…SLNV, YAQT…NINK, and EGET…HTDL. Residues 303–325 are compositionally biased toward polar residues; that stretch reads TGSNGVSNGQPLSSGQASVSANG. The segment at 303-330 is disordered; that stretch reads TGSNGVSNGQPLSSGQASVSANGTEEPE.

The chain is Ankyrin repeat domain-containing protein 10 (Ankrd10) from Mus musculus (Mouse).